The chain runs to 113 residues: Small ribosomal subunit protein mS41 (113 aa).

The transit peptide at 1-22 (MLILKRIFIIRNFIFPFSNCRY) directs the protein to the mitochondrion.

Belongs to the mitochondrion-specific ribosomal protein mS41 family. In terms of assembly, component of the mitochondrial small ribosomal subunit (mt-SSU). Mature yeast 74S mitochondrial ribosomes consist of a small (37S) and a large (54S) subunit. The 37S small subunit contains a 15S ribosomal RNA (15S mt-rRNA) and at least 32 different proteins. The 54S large subunit contains a 21S rRNA (21S mt-rRNA) and at least 45 different proteins.

It is found in the mitochondrion. In terms of biological role, component of the mitochondrial ribosome (mitoribosome), a dedicated translation machinery responsible for the synthesis of mitochondrial genome-encoded proteins, including at least some of the essential transmembrane subunits of the mitochondrial respiratory chain. The mitoribosomes are attached to the mitochondrial inner membrane and translation products are cotranslationally integrated into the membrane. mS41 is involved in telomere length regulation. This chain is Small ribosomal subunit protein mS41 (fyv4), found in Schizosaccharomyces pombe (strain 972 / ATCC 24843) (Fission yeast).